The primary structure comprises 884 residues: Alanine--tRNA ligase (884 aa).

Zn(2+) contacts are provided by histidine 572, histidine 576, cysteine 673, and histidine 677.

It belongs to the class-II aminoacyl-tRNA synthetase family. Requires Zn(2+) as cofactor.

The protein resides in the cytoplasm. The catalysed reaction is tRNA(Ala) + L-alanine + ATP = L-alanyl-tRNA(Ala) + AMP + diphosphate. Functionally, catalyzes the attachment of alanine to tRNA(Ala) in a two-step reaction: alanine is first activated by ATP to form Ala-AMP and then transferred to the acceptor end of tRNA(Ala). Also edits incorrectly charged Ser-tRNA(Ala) and Gly-tRNA(Ala) via its editing domain. The chain is Alanine--tRNA ligase from Xylella fastidiosa (strain M12).